The primary structure comprises 332 residues: Biotin synthase (332 aa).

The Radical SAM core domain occupies 51–279 (YKVQLASLLS…LSRVRLSAGR (229 aa)). [4Fe-4S] cluster is bound by residues cysteine 66, cysteine 70, and cysteine 73. [2Fe-2S] cluster-binding residues include cysteine 110, cysteine 142, cysteine 202, and arginine 274.

Belongs to the radical SAM superfamily. Biotin synthase family. In terms of assembly, homodimer. [4Fe-4S] cluster serves as cofactor. The cofactor is [2Fe-2S] cluster.

The enzyme catalyses (4R,5S)-dethiobiotin + (sulfur carrier)-SH + 2 reduced [2Fe-2S]-[ferredoxin] + 2 S-adenosyl-L-methionine = (sulfur carrier)-H + biotin + 2 5'-deoxyadenosine + 2 L-methionine + 2 oxidized [2Fe-2S]-[ferredoxin]. Its pathway is cofactor biosynthesis; biotin biosynthesis; biotin from 7,8-diaminononanoate: step 2/2. In terms of biological role, catalyzes the conversion of dethiobiotin (DTB) to biotin by the insertion of a sulfur atom into dethiobiotin via a radical-based mechanism. This Prochlorococcus marinus (strain MIT 9211) protein is Biotin synthase.